We begin with the raw amino-acid sequence, 196 residues long: Glycerol-3-phosphate acyltransferase (196 aa).

Transmembrane regions (helical) follow at residues 3 to 23 (NAVF…ILVS), 78 to 98 (VGVV…PVFY), 112 to 132 (VLLA…IVVF), and 154 to 174 (WLLL…LLLI).

Belongs to the PlsY family. Probably interacts with PlsX.

It localises to the cell inner membrane. The enzyme catalyses an acyl phosphate + sn-glycerol 3-phosphate = a 1-acyl-sn-glycero-3-phosphate + phosphate. Its pathway is lipid metabolism; phospholipid metabolism. Its function is as follows. Catalyzes the transfer of an acyl group from acyl-phosphate (acyl-PO(4)) to glycerol-3-phosphate (G3P) to form lysophosphatidic acid (LPA). This enzyme utilizes acyl-phosphate as fatty acyl donor, but not acyl-CoA or acyl-ACP. The sequence is that of Glycerol-3-phosphate acyltransferase from Methylobacillus flagellatus (strain ATCC 51484 / DSM 6875 / VKM B-1610 / KT).